The chain runs to 102 residues: Monothiol glutaredoxin-S10 (102 aa).

In terms of domain architecture, Glutaredoxin spans 1–101 (MDVVARLASQ…ILLKEAGALW (101 aa)). Cysteine 21 is a binding site for [2Fe-2S] cluster. The Responsive for interaction with TGA factors motif lies at 99–102 (ALWL).

The protein belongs to the glutaredoxin family. CC-type subfamily.

It localises to the cytoplasm. The protein localises to the nucleus. Functionally, may only reduce GSH-thiol disulfides, but not protein disulfides. The chain is Monothiol glutaredoxin-S10 (GRXS10) from Arabidopsis thaliana (Mouse-ear cress).